The sequence spans 260 residues: Phosphate import ATP-binding protein PstB 5 (260 aa).

In terms of domain architecture, ABC transporter spans 9-255 (IKVKDLSFYY…PLDSRTRDYV (247 aa)). An ATP-binding site is contributed by 41–48 (GPSGCGKS).

It belongs to the ABC transporter superfamily. Phosphate importer (TC 3.A.1.7) family. The complex is composed of two ATP-binding proteins (PstB), two transmembrane proteins (PstC and PstA) and a solute-binding protein (PstS).

The protein localises to the cell inner membrane. It carries out the reaction phosphate(out) + ATP + H2O = ADP + 2 phosphate(in) + H(+). Functionally, part of the ABC transporter complex PstSACB involved in phosphate import. Responsible for energy coupling to the transport system. The sequence is that of Phosphate import ATP-binding protein PstB 5 from Trichormus variabilis (strain ATCC 29413 / PCC 7937) (Anabaena variabilis).